Reading from the N-terminus, the 51-residue chain is Sperm protamine P1 (51 aa).

Disulfide bonds link cysteine 7/cysteine 15 and cysteine 40/cysteine 48.

This sequence belongs to the protamine P1 family. In terms of assembly, cross-linked by interchain disulfide bonds around the DNA-helix. Testis.

Its subcellular location is the nucleus. It is found in the chromosome. Protamines substitute for histones in the chromatin of sperm during the haploid phase of spermatogenesis. They compact sperm DNA into a highly condensed, stable and inactive complex. The polypeptide is Sperm protamine P1 (PRM1) (Capra hircus (Goat)).